Consider the following 639-residue polypeptide: Probable methyltransferase PMT18 (639 aa).

Topologically, residues 1–19 are cytoplasmic; that stretch reads MAKENSSHSLAEAKRKRLT. Residues 20-42 traverse the membrane as a helical; Signal-anchor for type II membrane protein segment; that stretch reads WILCVSGLCILSYVLGSWQTNTV. A disordered region spans residues 41-86; sequence TVPTSSSEAYSRMGCDETSTTTRAQTTQTQTNPSSDDTSSSLSSSE. At 43–639 the chain is on the lumenal side; that stretch reads PTSSSEAYSR…VKSYWTGPSS (597 aa). The segment covering 58 to 85 has biased composition (low complexity); it reads TSTTTRAQTTQTQTNPSSDDTSSSLSSS. Asn-104 and Asn-427 each carry an N-linked (GlcNAc...) asparagine glycan.

The protein belongs to the methyltransferase superfamily.

It localises to the endoplasmic reticulum membrane. This chain is Probable methyltransferase PMT18, found in Arabidopsis thaliana (Mouse-ear cress).